The sequence spans 456 residues: Bifunctional protein GlmU (456 aa).

The segment at 1 to 229 (MLNSAMSVVI…ISETDGVNNR (229 aa)) is pyrophosphorylase. UDP-N-acetyl-alpha-D-glucosamine contacts are provided by residues 11–14 (LAAG), Lys-25, Gln-76, 81–82 (GT), 103–105 (YGD), Gly-140, Glu-154, Asn-169, and Asn-227. Asp-105 is a binding site for Mg(2+). A Mg(2+)-binding site is contributed by Asn-227. The linker stretch occupies residues 230–250 (LQLSRLERIYQAEQAEKLLLS). The interval 251–456 (GVMLRDPARF…QGWQRPVKKK (206 aa)) is N-acetyltransferase. UDP-N-acetyl-alpha-D-glucosamine-binding residues include Arg-333 and Lys-351. His-363 functions as the Proton acceptor in the catalytic mechanism. Positions 366 and 377 each coordinate UDP-N-acetyl-alpha-D-glucosamine. Acetyl-CoA is bound by residues Ala-380, 386–387 (NY), Ser-405, Ala-423, and Arg-440.

In the N-terminal section; belongs to the N-acetylglucosamine-1-phosphate uridyltransferase family. It in the C-terminal section; belongs to the transferase hexapeptide repeat family. In terms of assembly, homotrimer. It depends on Mg(2+) as a cofactor.

Its subcellular location is the cytoplasm. It carries out the reaction alpha-D-glucosamine 1-phosphate + acetyl-CoA = N-acetyl-alpha-D-glucosamine 1-phosphate + CoA + H(+). The enzyme catalyses N-acetyl-alpha-D-glucosamine 1-phosphate + UTP + H(+) = UDP-N-acetyl-alpha-D-glucosamine + diphosphate. Its pathway is nucleotide-sugar biosynthesis; UDP-N-acetyl-alpha-D-glucosamine biosynthesis; N-acetyl-alpha-D-glucosamine 1-phosphate from alpha-D-glucosamine 6-phosphate (route II): step 2/2. The protein operates within nucleotide-sugar biosynthesis; UDP-N-acetyl-alpha-D-glucosamine biosynthesis; UDP-N-acetyl-alpha-D-glucosamine from N-acetyl-alpha-D-glucosamine 1-phosphate: step 1/1. It participates in bacterial outer membrane biogenesis; LPS lipid A biosynthesis. In terms of biological role, catalyzes the last two sequential reactions in the de novo biosynthetic pathway for UDP-N-acetylglucosamine (UDP-GlcNAc). The C-terminal domain catalyzes the transfer of acetyl group from acetyl coenzyme A to glucosamine-1-phosphate (GlcN-1-P) to produce N-acetylglucosamine-1-phosphate (GlcNAc-1-P), which is converted into UDP-GlcNAc by the transfer of uridine 5-monophosphate (from uridine 5-triphosphate), a reaction catalyzed by the N-terminal domain. In Salmonella agona (strain SL483), this protein is Bifunctional protein GlmU.